The chain runs to 726 residues: Probable dipeptidyl-peptidase 5 (726 aa).

The signal sequence occupies residues 1–19; that stretch reads MAAAKWLIASLAFASSGLA. N-linked (GlcNAc...) asparagine glycosylation is found at Asn96 and Asn252. Residues 269-291 form a disordered region; it reads AEPINKRNGPRTPQGIEGASSSP. N-linked (GlcNAc...) asparagine glycosylation is present at Asn485. The Charge relay system role is filled by Ser558. An N-linked (GlcNAc...) asparagine glycan is attached at Asn605. Residues Asp641 and His673 each act as charge relay system in the active site. Asn699 carries an N-linked (GlcNAc...) asparagine glycan.

Belongs to the peptidase S9C family.

Its subcellular location is the secreted. In terms of biological role, extracellular dipeptidyl-peptidase which removes N-terminal dipeptides sequentially from polypeptides having unsubstituted N-termini. Contributes to pathogenicity. This Arthroderma benhamiae (strain ATCC MYA-4681 / CBS 112371) (Trichophyton mentagrophytes) protein is Probable dipeptidyl-peptidase 5 (DPP5).